Reading from the N-terminus, the 95-residue chain is Immunogenic miracidial antigen 8C (95 aa).

Residues 1 to 15 (EFTISFSSPVISTGQ) show a composition bias toward polar residues. The tract at residues 1 to 95 (EFTISFSSPV…PKKYGSGHKY (95 aa)) is disordered. The segment covering 20 to 41 (GDEDYHDGDDDVDYTDDVDDVD) has biased composition (acidic residues). Polar residues predominate over residues 45 to 59 (GSPSQLLQGGYQRNQ).

It belongs to the immunogenic miracidial antigen family.

This chain is Immunogenic miracidial antigen 8C (8C), found in Schistosoma japonicum (Blood fluke).